A 204-amino-acid polypeptide reads, in one-letter code: Nascent polypeptide-associated complex subunit alpha (204 aa).

Residues 1–19 show a composition bias toward basic and acidic residues; it reads MADPRVEELPDEEVPKTNV. Disordered stretches follow at residues 1–48 and 119–167; these read MADP…HSRN and LAAA…GLEA. Acidic residues predominate over residues 22-32; sequence AGSDSESEAGE. The NAC-A/B domain maps to 46-111; the sequence is SRNEKKARKA…AKIEDLNSQA (66 aa). The span at 119–128 shows a compositional bias: low complexity; the sequence is LAAAEAAAGE. Residues 129 to 151 show a composition bias toward basic and acidic residues; it reads HAGHDHDHDHGKGKAPETEAKKE. The span at 152–164 shows a compositional bias: acidic residues; the sequence is EEEDDGEEVDETG. The 40-residue stretch at 165-204 folds into the UBA domain; sequence LEAKDIELVMAQANVSRKKAVKALRENDNDIVNSIMALSI.

Belongs to the NAC-alpha family. Part of the nascent polypeptide-associated complex (NAC), consisting of egd2 and egd1. NAC associates with ribosomes via egd1.

The protein localises to the cytoplasm. It localises to the nucleus. Its function is as follows. Component of the nascent polypeptide-associated complex (NAC), a dynamic component of the ribosomal exit tunnel, protecting the emerging polypeptides from interaction with other cytoplasmic proteins to ensure appropriate nascent protein targeting. The NAC complex also promotes mitochondrial protein import by enhancing productive ribosome interactions with the outer mitochondrial membrane and blocks the inappropriate interaction of ribosomes translating non-secretory nascent polypeptides with translocation sites in the membrane of the endoplasmic reticulum. Egd2 may also be involved in transcription regulation. This is Nascent polypeptide-associated complex subunit alpha (egd2) from Aspergillus clavatus (strain ATCC 1007 / CBS 513.65 / DSM 816 / NCTC 3887 / NRRL 1 / QM 1276 / 107).